The chain runs to 60 residues: Large ribosomal subunit protein bL32 (60 aa).

A compositionally biased stretch (basic residues) spans 1 to 16 (MAVPKRKTSPSKRGMR). Residues 1–60 (MAVPKRKTSPSKRGMRRSADALKAPTYVEDKNSGEMRRPHHIDLKTGMYRGRQVLTPKES) form a disordered region. The segment covering 28-44 (VEDKNSGEMRRPHHIDL) has biased composition (basic and acidic residues).

It belongs to the bacterial ribosomal protein bL32 family.

The polypeptide is Large ribosomal subunit protein bL32 (Mesorhizobium japonicum (strain LMG 29417 / CECT 9101 / MAFF 303099) (Mesorhizobium loti (strain MAFF 303099))).